Reading from the N-terminus, the 511-residue chain is Pancreatic alpha-amylase (511 aa).

An N-terminal signal peptide occupies residues 1–15 (MKFFLLLFTIGFCWA). Residue glutamine 16 is modified to Pyrrolidone carboxylic acid. 3 cysteine pairs are disulfide-bonded: cysteine 43/cysteine 101, cysteine 85/cysteine 130, and cysteine 156/cysteine 175. Positions 115, 173, and 182 each coordinate Ca(2+). Residue arginine 210 participates in chloride binding. Residue aspartate 212 is the Nucleophile of the active site. Position 216 (histidine 216) interacts with Ca(2+). Glutamate 248 functions as the Proton donor in the catalytic mechanism. Chloride-binding residues include asparagine 313 and arginine 352. 2 disulfide bridges follow: cysteine 393/cysteine 399 and cysteine 465/cysteine 477. A glycan (N-linked (GlcNAc...) asparagine) is linked at asparagine 476.

Belongs to the glycosyl hydrolase 13 family. As to quaternary structure, monomer. Binds to the sea anemone inhibitor helianthamide. Ca(2+) serves as cofactor. Chloride is required as a cofactor. Detected in pancreas (at protein level).

It localises to the secreted. It is found in the extracellular space. The catalysed reaction is Endohydrolysis of (1-&gt;4)-alpha-D-glucosidic linkages in polysaccharides containing three or more (1-&gt;4)-alpha-linked D-glucose units.. This Homo sapiens (Human) protein is Pancreatic alpha-amylase (AMY2A).